Reading from the N-terminus, the 728-residue chain is Catalase-peroxidase (728 aa).

An N-terminal signal peptide occupies residues 1–19 (MSTEAKCPVTGGATRSSSA). Positions 1–20 (MSTEAKCPVTGGATRSSSAG) are disordered. Residues 96–219 (WHAAGTYRIG…LAAVQMGLIY (124 aa)) constitute a cross-link (tryptophyl-tyrosyl-methioninium (Trp-Tyr) (with M-245)). His-97 acts as the Proton acceptor in catalysis. Residues 219–245 (YVNPEGPNGKPDPVAAARDIRETFARM) constitute a cross-link (tryptophyl-tyrosyl-methioninium (Tyr-Met) (with W-96)). His-260 serves as a coordination point for heme b.

It belongs to the peroxidase family. Peroxidase/catalase subfamily. Homodimer or homotetramer. Requires heme b as cofactor. In terms of processing, formation of the three residue Trp-Tyr-Met cross-link is important for the catalase, but not the peroxidase activity of the enzyme.

The catalysed reaction is H2O2 + AH2 = A + 2 H2O. The enzyme catalyses 2 H2O2 = O2 + 2 H2O. Bifunctional enzyme with both catalase and broad-spectrum peroxidase activity. This Acidiphilium cryptum (strain JF-5) protein is Catalase-peroxidase.